The following is a 308-amino-acid chain: Ribosomal RNA small subunit methyltransferase H (308 aa).

S-adenosyl-L-methionine is bound by residues glycine 36 to histidine 38, aspartate 55, phenylalanine 86, aspartate 103, and glutamine 110.

It belongs to the methyltransferase superfamily. RsmH family.

The protein resides in the cytoplasm. It carries out the reaction cytidine(1402) in 16S rRNA + S-adenosyl-L-methionine = N(4)-methylcytidine(1402) in 16S rRNA + S-adenosyl-L-homocysteine + H(+). In terms of biological role, specifically methylates the N4 position of cytidine in position 1402 (C1402) of 16S rRNA. This chain is Ribosomal RNA small subunit methyltransferase H, found in Helicobacter pylori (strain G27).